We begin with the raw amino-acid sequence, 736 residues long: Subtilisin-like protease SBT4.12 (736 aa).

An N-terminal signal peptide occupies residues 1–24; it reads MANLAASTCLYSWLLVLLLSSVSA. Residues 25–110 constitute a propeptide, activation peptide; that stretch reads IIDEDTQVYI…VFPNKILQLH (86 aa). Residues 32–110 enclose the Inhibitor I9 domain; it reads VYIVYMGSLS…VFPNKILQLH (79 aa). The region spanning 114–580 is the Peptidase S8 domain; sequence SWDFMGVKEG…AGHVDPMAAL (467 aa). Aspartate 142 (charge relay system) is an active-site residue. An N-linked (GlcNAc...) asparagine glycan is attached at asparagine 173. The active-site Charge relay system is the histidine 197. N-linked (GlcNAc...) asparagine glycosylation is found at asparagine 220, asparagine 381, and asparagine 459. Residues 353–437 form the PA domain; the sequence is KYPLVYGKSA…GLKAKDFKSL (85 aa). Residue serine 519 is the Charge relay system of the active site. N-linked (GlcNAc...) asparagine glycosylation is found at asparagine 601, asparagine 649, and asparagine 659.

Belongs to the peptidase S8 family. Post-translationally, the C-terminal propeptide is autocleaved. In terms of tissue distribution, specifically expressed in root stele of the root hair zone.

Its subcellular location is the secreted. This chain is Subtilisin-like protease SBT4.12, found in Arabidopsis thaliana (Mouse-ear cress).